We begin with the raw amino-acid sequence, 200 residues long: Phosphoprotein p30 (200 aa).

The protein belongs to the asfivirus phosphoprotein p30 family. In terms of assembly, oligomer. Interacts with host HNRNPK. In terms of processing, phosphorylated on serine residues in the 115 N-terminal amino acids.

Its subcellular location is the host cytoplasm. It localises to the host nucleus. The protein localises to the virion. Its function is as follows. Modifies the subcellular distribution of heterogeneous nuclear ribonucleoprotein K (HNRNPK) and may contribute to modulate HNRNPK functions related to processing and export of mRNAs during ASFV infection. Necessary for virus internalization. The sequence is that of Phosphoprotein p30 from African swine fever virus (isolate Tick/Malawi/Lil 20-1/1983) (ASFV).